The primary structure comprises 312 residues: Methionyl-tRNA formyltransferase (312 aa).

113-116 (SLLP) serves as a coordination point for (6S)-5,6,7,8-tetrahydrofolate.

The protein belongs to the Fmt family.

The catalysed reaction is L-methionyl-tRNA(fMet) + (6R)-10-formyltetrahydrofolate = N-formyl-L-methionyl-tRNA(fMet) + (6S)-5,6,7,8-tetrahydrofolate + H(+). Functionally, attaches a formyl group to the free amino group of methionyl-tRNA(fMet). The formyl group appears to play a dual role in the initiator identity of N-formylmethionyl-tRNA by promoting its recognition by IF2 and preventing the misappropriation of this tRNA by the elongation apparatus. This Francisella philomiragia subsp. philomiragia (strain ATCC 25017 / CCUG 19701 / FSC 153 / O#319-036) protein is Methionyl-tRNA formyltransferase.